We begin with the raw amino-acid sequence, 152 residues long: Ribosome maturation factor RimP (152 aa).

It belongs to the RimP family.

It is found in the cytoplasm. In terms of biological role, required for maturation of 30S ribosomal subunits. The sequence is that of Ribosome maturation factor RimP from Burkholderia multivorans (strain ATCC 17616 / 249).